Reading from the N-terminus, the 263-residue chain is Transcription factor 19-like protein (263 aa).

The 58-residue stretch at 31–88 (YGLGCRADLCDVALRPQQEPGLISGVHAELHAELQGDDWRVSLEDHSSQGTLVNNVRL) folds into the FHA domain. The residue at position 78 (serine 78) is a Phosphoserine. Disordered stretches follow at residues 140-164 (SKGE…PLST) and 189-225 (LTFS…RKSA).

The protein localises to the nucleus. Functionally, potential transcription factor that may play a role in the regulation of genes involved in cell cycle G1/S transition. May bind to regulatory elements of genes, including the promoter of the transcription factor FOXO1. The protein is Transcription factor 19-like protein (Tcf19) of Mus musculus (Mouse).